The following is a 133-amino-acid chain: Membrane protein FAM174B (133 aa).

A signal peptide spans 1-19; sequence MWLYTFAVALIVIAQEING. Over 20–67 the chain is Extracellular; sequence EPHTRPSSATPLNATLPPQEEGSAQNTTDAAVGSRLSTILRDLPTIKN. Positions 22–47 are disordered; the sequence is HTRPSSATPLNATLPPQEEGSAQNTT. Residues asparagine 32, asparagine 45, and asparagine 67 are each glycosylated (N-linked (GlcNAc...) asparagine). A helical membrane pass occupies residues 68-88; sequence ISIFICVLTTLLITCLVIKIC. Residues 89–133 lie on the Cytoplasmic side of the membrane; sequence RSARKIRKTRKYDIITTPAERVEMAPLNEENDEEDDSTLFDVKYR. A disordered region spans residues 113-133; it reads APLNEENDEEDDSTLFDVKYR. Residues 117-126 show a composition bias toward acidic residues; the sequence is EENDEEDDST.

The protein belongs to the FAM174 family.

It localises to the cell membrane. The protein localises to the golgi apparatus. In terms of biological role, essential for Golgi structural integrity. The protein is Membrane protein FAM174B (Fam174b) of Danio rerio (Zebrafish).